A 142-amino-acid chain; its full sequence is Large ribosomal subunit protein uL13 (142 aa).

Belongs to the universal ribosomal protein uL13 family. In terms of assembly, part of the 50S ribosomal subunit.

Its function is as follows. This protein is one of the early assembly proteins of the 50S ribosomal subunit, although it is not seen to bind rRNA by itself. It is important during the early stages of 50S assembly. In Herminiimonas arsenicoxydans, this protein is Large ribosomal subunit protein uL13.